The chain runs to 281 residues: CCAAT/enhancer-binding protein epsilon (281 aa).

The segment at 1–30 is disordered; that stretch reads MSHGTYYECEPRAGQQPLEFSGARAGPGEL. Residue Lys-121 forms a Glycyl lysine isopeptide (Lys-Gly) (interchain with G-Cter in SUMO2) linkage. Ser-181 is modified (phosphoserine). The region spanning 204–267 is the bZIP domain; it reads SLEYRLRRER…DTLRNLFRQI (64 aa). A basic motif region spans residues 208–228; that stretch reads RLRRERNNIAVRKSRDKAKRR. A leucine-zipper region spans residues 230-237; the sequence is LETQQKVL.

It belongs to the bZIP family. C/EBP subfamily. In terms of assembly, binds DNA as a homodimer and as a heterodimer. Can form stable heterodimers with CEBPA, CEBPB and CEBPD. Interacts with GATA1 and SPI1. Interacts with SMARCD2. In terms of processing, phosphorylated.

Its subcellular location is the nucleus. In terms of biological role, transcriptional activator. C/EBP are DNA-binding proteins that recognize two different motifs: the CCAAT homology common to many promoters and the enhanced core homology common to many enhancers. Required for the promyelocyte-myelocyte transition in myeloid differentiation. In Ovis aries (Sheep), this protein is CCAAT/enhancer-binding protein epsilon (CEBPE).